A 423-amino-acid chain; its full sequence is G-protein coupled receptor 83 (423 aa).

A signal peptide spans 1–17 (MKVPPVLLLFLLSSVRA). Residues 18-71 (TEQPQVVTEHPSMEAALTGPNASSHFWANYTFSDWQNFVGRRRYGAESQNPTVK) lie on the Extracellular side of the membrane. Asparagine 38 and asparagine 46 each carry an N-linked (GlcNAc...) asparagine glycan. A helical transmembrane segment spans residues 72 to 92 (ALLIVAYSFTIVFSLFGNVLV). The Cytoplasmic portion of the chain corresponds to 93–107 (CHVIFKNQRMHSATS). The helical transmembrane segment at 108-129 (LFIVNLAVADIMITLLNTPFTL) threads the bilayer. At 130-145 (VRFVNSTWVFGKGMCH) the chain is on the extracellular side. The N-linked (GlcNAc...) asparagine glycan is linked to asparagine 134. Cysteines 144 and 224 form a disulfide. The helical transmembrane segment at 146–167 (VSRFAQYCSLHVSALTLTAIAV) threads the bilayer. Residues 168–186 (DRHQVIMHPLKPRISITKG) lie on the Cytoplasmic side of the membrane. Residues 187–208 (VIYIAVIWVMATFFSLPHAICQ) form a helical membrane-spanning segment. The Extracellular segment spans residues 209–238 (KLFTFKYSEDIVRSLCLPDFPEPADLFWKY). The chain crosses the membrane as a helical span at residues 239–260 (LDLATFILLYLLPLFIISVAYA). Residues 261 to 293 (RVAKKLWLCNTIGDVTTEQYLALRRKKKTTVKM) are Cytoplasmic-facing. Residues 294-315 (LVLVVVLFALCWFPLNCYVLLL) traverse the membrane as a helical segment. Residues 316–327 (SSKAIHTNNALY) lie on the Extracellular side of the membrane. The helical transmembrane segment at 328-348 (FAFHWFAMSSTCYNPFIYCWL) threads the bilayer. At 349-423 (NENFRVELKA…SSVEPVVAMS (75 aa)) the chain is on the cytoplasmic side. A disordered region spans residues 389–423 (SHGRRAPLPNHHLPSSQIQSGKTDLSSVEPVVAMS). A compositionally biased stretch (polar residues) spans 401–414 (LPSSQIQSGKTDLS).

It belongs to the G-protein coupled receptor 1 family. Predominantly expressed in the brain, with moderate expression in the hypothalamus. Expressed in the thymus.

It is found in the cell membrane. Its function is as follows. G-protein coupled receptor for PEN, a neuropeptide produced from the precursor protein, proSAAS (encoded by PCSK1N). Acts through a G(i)- and G(q)-alpha-alpha-mediated pathway in response to PEN. Plays a role in food intake and body weight regulation. May contribute to the regulation of anxiety-related behaviors. In Mus musculus (Mouse), this protein is G-protein coupled receptor 83.